The chain runs to 147 residues: uncharacterized protein (147 aa).

This is an uncharacterized protein from Ureaplasma parvum serovar 3 (strain ATCC 700970).